The sequence spans 655 residues: Very long-chain specific acyl-CoA dehydrogenase, mitochondrial (655 aa).

Residues 1-40 constitute a mitochondrion transit peptide; that stretch reads MQSARMTPSVGRQLLRLGARSSRSAALQGQPRPTSAQRLY. Residues 1–70 form a disordered region; it reads MQSARMTPSV…TREKPARAES (70 aa). A compositionally biased stretch (polar residues) spans 21-37; that stretch reads SSRSAALQGQPRPTSAQ. A catalytic region spans residues 41–482; that stretch reads ASEATQAVLE…ALQGCMDKGK (442 aa). The residue at position 51 (Lys51) is an N6-acetyllysine. Over residues 60–70 the composition is skewed to basic and acidic residues; the sequence is STREKPARAES. Lys71 and Lys127 each carry N6-acetyllysine; alternate. N6-succinyllysine; alternate occurs at positions 71 and 127. An N6-succinyllysine modification is found at Lys195. 214-223 contacts FAD; sequence FCLTEPSSGS. Cys237 is modified (S-nitrosocysteine). Lys239 is subject to N6-acetyllysine; alternate. Lys239 is subject to N6-succinyllysine; alternate. Residue 249-251 participates in FAD binding; that stretch reads WIS. Lys268 carries the N6-succinyllysine modification. 2 positions are modified to N6-acetyllysine; alternate: Lys276 and Lys278. Residues Lys276 and Lys278 each carry the N6-succinyllysine; alternate modification. N6-acetyllysine is present on residues Lys298 and Lys316. Lys331 is modified (N6-acetyllysine; alternate). Lys331 is modified (N6-succinyllysine; alternate). Lys372 is subject to N6-succinyllysine. 461 to 463 contributes to the substrate binding site; the sequence is FEG. Catalysis depends on Glu462, which acts as the Proton acceptor. FAD is bound at residue 464-466; the sequence is TND. The residue at position 482 (Lys482) is an N6-acetyllysine; alternate. Lys482 carries the post-translational modification N6-succinyllysine; alternate. Residues 483 to 516 form a membrane-anchoring region; that stretch reads ELTGLGNALKNPLGNVGLLIGEASKQLRRRTGIG. 2 positions are modified to phosphoserine: Ser517 and Ser522. Lys550 carries the post-translational modification N6-acetyllysine. An N6-acetyllysine; alternate modification is found at Lys556. Lys556 is modified (N6-succinyllysine; alternate). Position 562 (Gln562) interacts with FAD. Lys639 carries the N6-succinyllysine modification.

This sequence belongs to the acyl-CoA dehydrogenase family. In terms of assembly, homodimer. Homodimerizes after import into the mitochondrion. Requires FAD as cofactor. In terms of processing, S-nitrosylation at Cys-237 in liver improves catalytic efficiency. Widely expressed (at protein level).

The protein localises to the mitochondrion inner membrane. The enzyme catalyses a very-long-chain 2,3-saturated fatty acyl-CoA + oxidized [electron-transfer flavoprotein] + H(+) = a very-long-chain (2E)-enoyl-CoA + reduced [electron-transfer flavoprotein]. The catalysed reaction is dodecanoyl-CoA + oxidized [electron-transfer flavoprotein] + H(+) = (2E)-dodecenoyl-CoA + reduced [electron-transfer flavoprotein]. It catalyses the reaction tetradecanoyl-CoA + oxidized [electron-transfer flavoprotein] + H(+) = (2E)-tetradecenoyl-CoA + reduced [electron-transfer flavoprotein]. It carries out the reaction oxidized [electron-transfer flavoprotein] + hexadecanoyl-CoA + H(+) = (2E)-hexadecenoyl-CoA + reduced [electron-transfer flavoprotein]. The enzyme catalyses octadecanoyl-CoA + oxidized [electron-transfer flavoprotein] + H(+) = (2E)-octadecenoyl-CoA + reduced [electron-transfer flavoprotein]. The catalysed reaction is eicosanoyl-CoA + oxidized [electron-transfer flavoprotein] + H(+) = (2E)-eicosenoyl-CoA + reduced [electron-transfer flavoprotein]. It catalyses the reaction docosanoyl-CoA + oxidized [electron-transfer flavoprotein] + H(+) = (2E)-docosenoyl-CoA + reduced [electron-transfer flavoprotein]. It carries out the reaction tetracosanoyl-CoA + oxidized [electron-transfer flavoprotein] + H(+) = (2E)-tetracosenoyl-CoA + reduced [electron-transfer flavoprotein]. It participates in lipid metabolism; mitochondrial fatty acid beta-oxidation. Its function is as follows. Very long-chain specific acyl-CoA dehydrogenase is one of the acyl-CoA dehydrogenases that catalyze the first step of mitochondrial fatty acid beta-oxidation, an aerobic process breaking down fatty acids into acetyl-CoA and allowing the production of energy from fats. The first step of fatty acid beta-oxidation consists in the removal of one hydrogen from C-2 and C-3 of the straight-chain fatty acyl-CoA thioester, resulting in the formation of trans-2-enoyl-CoA. Among the different mitochondrial acyl-CoA dehydrogenases, very long-chain specific acyl-CoA dehydrogenase acts specifically on acyl-CoAs with saturated 12 to 24 carbons long primary chains. The sequence is that of Very long-chain specific acyl-CoA dehydrogenase, mitochondrial from Rattus norvegicus (Rat).